The following is a 267-amino-acid chain: MGRGKVQLKRIENKINRQVTFSKRRNGLLKKAHEISVLCDAEVAAIVFSPKGKLYEYATDSRMDKILERYERYSYAEKALISAESESEGNWCHEYRKLKAKIETIQKCHKHLMGEDLESLNLKELQQLEQQLESSLKHIISRKSHLMLESISELQKKERSLQEENKALQKELVERQKNVRGQQQVGQWDQTQVQAQAQAQPQAQTSSSSSSMLRDQQALLPPQNICYPPVMMGERNDAAAAAAVAAQGQVQLRIGGLPPWMLSHLNA.

Residues 1–61 (MGRGKVQLKR…GKLYEYATDS (61 aa)) form the MADS-box domain. Residues 88-178 (EGNWCHEYRK…QKELVERQKN (91 aa)) form the K-box domain. The disordered stretch occupies residues 179–215 (VRGQQQVGQWDQTQVQAQAQAQPQAQTSSSSSSMLRD). The segment covering 182–215 (QQQVGQWDQTQVQAQAQAQPQAQTSSSSSSMLRD) has biased composition (low complexity).

As to quaternary structure, may interact with the K-box of MADS1 and MADS6.

The protein resides in the nucleus. Functionally, probable transcription factor. This is MADS-box transcription factor 15 (MADS15) from Oryza sativa subsp. japonica (Rice).